The primary structure comprises 289 residues: Transcriptional regulator Rob (289 aa).

The region spanning 8–106 is the HTH araC/xylS-type domain; that stretch reads RDLLIWLEGH…SQTPALYRRS (99 aa). DNA-binding regions (H-T-H motif) lie at residues 25–46 and 73–96; these read DNVAAKAGYSKWHLQRMFKDVT and ILDIALQYRFDSQQTFTRAFKKQF.

In terms of biological role, transcriptional regulator. Represses transcription of genes belonging to the flagellar regulon, including flhD, flhB and fliC; probably thereby leading to repression of motility. Binds to regulatory regions of target genes, including the promoters of the flhDC operon and of P-type ATPase mgtA. Involved in post-transcriptional regulation of expression. Represses expression of the flhDC operon in a post-transcriptional manner. Binds to the right arm of the replication origin oriC of the chromosome. Rob binding may influence the formation of the nucleoprotein structure, required for oriC function in the initiation of replication. The protein is Transcriptional regulator Rob of Salmonella typhimurium (strain LT2 / SGSC1412 / ATCC 700720).